Here is an 89-residue protein sequence, read N- to C-terminus: Acylphosphatase (89 aa).

In terms of domain architecture, Acylphosphatase-like spans R3–R89. Residues R18 and N36 contribute to the active site.

The protein belongs to the acylphosphatase family.

The enzyme catalyses an acyl phosphate + H2O = a carboxylate + phosphate + H(+). This is Acylphosphatase (acyP) from Rhodococcus jostii (strain RHA1).